A 266-amino-acid polypeptide reads, in one-letter code: Enterotoxin type C-3 (266 aa).

The signal sequence occupies residues 1 to 27 (MYKRLFISRVILIFALILVISTPNVLA). Zn(2+)-binding residues include Asp-36 and Asp-110. Cysteines 120 and 137 form a disulfide. Positions 145 and 149 each coordinate Zn(2+).

The protein belongs to the staphylococcal/streptococcal toxin family. Interacts with MHC class II molecules composed of alpha/HLA-DRA and beta/HLA-DRB1 chains. Interacts with host T-cell receptor/TCR beta variable chain TRBV8-2.

The protein resides in the secreted. Staphylococcal enterotoxin that activates the host immune system by binding as unprocessed molecules to major histocompatibility (MHC) complex class II and T-cell receptor (TCR) molecules. In turn, this ternary complex activates a large number of T-lymphocytes initiating a systemic release of pro-inflammatory cytokines. Also causes the intoxication staphylococcal food poisoning syndrome. This is Enterotoxin type C-3 (entC3) from Staphylococcus aureus.